The sequence spans 184 residues: Outer-membrane lipoprotein carrier protein (184 aa).

The signal sequence occupies residues 1-19 (MRAFLKILMVLIFMSVAYA).

It belongs to the LolA family. Monomer.

Its subcellular location is the periplasm. In terms of biological role, participates in the translocation of lipoproteins from the inner membrane to the outer membrane. Only forms a complex with a lipoprotein if the residue after the N-terminal Cys is not an aspartate (The Asp acts as a targeting signal to indicate that the lipoprotein should stay in the inner membrane). This Helicobacter pylori (strain HPAG1) protein is Outer-membrane lipoprotein carrier protein.